We begin with the raw amino-acid sequence, 342 residues long: L-threonine 3-dehydrogenase (342 aa).

Cysteine 38 provides a ligand contact to Zn(2+). Catalysis depends on charge relay system residues threonine 40 and histidine 43. Residues histidine 63, glutamate 64, cysteine 93, cysteine 96, cysteine 99, and cysteine 107 each coordinate Zn(2+). NAD(+)-binding positions include isoleucine 175, aspartate 195, arginine 200, 262–264 (LGI), and 286–287 (IY).

The protein belongs to the zinc-containing alcohol dehydrogenase family. Homotetramer. It depends on Zn(2+) as a cofactor.

It is found in the cytoplasm. It catalyses the reaction L-threonine + NAD(+) = (2S)-2-amino-3-oxobutanoate + NADH + H(+). The protein operates within amino-acid degradation; L-threonine degradation via oxydo-reductase pathway; glycine from L-threonine: step 1/2. Its function is as follows. Catalyzes the NAD(+)-dependent oxidation of L-threonine to 2-amino-3-ketobutyrate. This Burkholderia vietnamiensis (strain G4 / LMG 22486) (Burkholderia cepacia (strain R1808)) protein is L-threonine 3-dehydrogenase.